The primary structure comprises 406 residues: Cysteine desulfurase (406 aa).

K226 bears the N6-(pyridoxal phosphate)lysine mark. C364 serves as the catalytic Cysteine persulfide intermediate.

Belongs to the class-V pyridoxal-phosphate-dependent aminotransferase family. Csd subfamily. As to quaternary structure, homodimer. Interacts with SufE and the SufBCD complex composed of SufB, SufC and SufD. The interaction with SufE is required to mediate the direct transfer of the sulfur atom from the S-sulfanylcysteine. Pyridoxal 5'-phosphate serves as cofactor.

The protein resides in the cytoplasm. The catalysed reaction is (sulfur carrier)-H + L-cysteine = (sulfur carrier)-SH + L-alanine. The enzyme catalyses L-selenocysteine + AH2 = hydrogenselenide + L-alanine + A + H(+). It functions in the pathway cofactor biosynthesis; iron-sulfur cluster biosynthesis. In terms of biological role, cysteine desulfurases mobilize the sulfur from L-cysteine to yield L-alanine, an essential step in sulfur metabolism for biosynthesis of a variety of sulfur-containing biomolecules. Component of the suf operon, which is activated and required under specific conditions such as oxidative stress and iron limitation. Acts as a potent selenocysteine lyase in vitro, that mobilizes selenium from L-selenocysteine. Selenocysteine lyase activity is however unsure in vivo. This is Cysteine desulfurase from Escherichia coli (strain K12 / MC4100 / BW2952).